A 251-amino-acid polypeptide reads, in one-letter code: MGRMWASEVLLLLLLGSSRAVTPGLDVSTAPGLDGSIPPGLDGSVSPGLDGSVSPGLDGSASPGLDGSVSPGLDGSASPGLDGSTPAGRDGTITPKLEGTITPKQDGSISPSWPWRWPITYLDAILAAVRLLNQKISGPCILRLREAQPRPGWVGTLQRRREVSFLVEDGPCPPGVDCRSCEPGALQHCVGTVSIEQQPTAELRCRPLRPQPIRNWWIRIWEWLNGIRKRLRQRSPFYVRGHLNVTSTPQP.

The first 20 residues, 1-20 (MGRMWASEVLLLLLLGSSRA), serve as a signal peptide directing secretion. Positions 21–211 (VTPGLDVSTA…ELRCRPLRPQ (191 aa)) are excised as a propeptide. The tract at residues 29 to 109 (TAPGLDGSIP…TITPKQDGSI (81 aa)) is disordered. Cystine bridges form between Cys172–Cys181 and Cys189–Cys205.

It belongs to the cathelicidin family. In terms of tissue distribution, detected in bursa of Fabricius, in filamentous structures surrounding the basal and lateral surfaces of bursal M cells (at protein level). Detected in bursa of Fabricius, in secretory enterocytes of the interfollicular bursal epithelium, but not in M cells.

Its subcellular location is the secreted. Functionally, has potent antimicrobial activity against Gram-positive and Gram-negative bacteria (in vitro). May play a role in the innate immune response. This is Cathelicidin-B1 (CATHB1) from Gallus gallus (Chicken).